The chain runs to 206 residues: Small ribosomal subunit protein uS4 (206 aa).

Positions 96–156 (GRLDNVVYRM…EKAKKQSRVK (61 aa)) constitute an S4 RNA-binding domain.

Belongs to the universal ribosomal protein uS4 family. In terms of assembly, part of the 30S ribosomal subunit. Contacts protein S5. The interaction surface between S4 and S5 is involved in control of translational fidelity.

In terms of biological role, one of the primary rRNA binding proteins, it binds directly to 16S rRNA where it nucleates assembly of the body of the 30S subunit. With S5 and S12 plays an important role in translational accuracy. This chain is Small ribosomal subunit protein uS4, found in Salmonella typhi.